Consider the following 121-residue polypeptide: Small ribosomal subunit protein uS13 (121 aa).

The segment at 91–121 is disordered; that stretch reads HRRGLPVRGQNTKNNARTRKGKKASMAGKKK. A compositionally biased stretch (basic residues) spans 106–121; that stretch reads ARTRKGKKASMAGKKK.

The protein belongs to the universal ribosomal protein uS13 family. In terms of assembly, part of the 30S ribosomal subunit. Forms a loose heterodimer with protein S19. Forms two bridges to the 50S subunit in the 70S ribosome.

Functionally, located at the top of the head of the 30S subunit, it contacts several helices of the 16S rRNA. In the 70S ribosome it contacts the 23S rRNA (bridge B1a) and protein L5 of the 50S subunit (bridge B1b), connecting the 2 subunits; these bridges are implicated in subunit movement. Contacts the tRNAs in the A and P-sites. The protein is Small ribosomal subunit protein uS13 of Lacticaseibacillus paracasei (strain ATCC 334 / BCRC 17002 / CCUG 31169 / CIP 107868 / KCTC 3260 / NRRL B-441) (Lactobacillus paracasei).